Consider the following 133-residue polypeptide: Ribosome-binding factor A (133 aa).

The protein belongs to the RbfA family. In terms of assembly, monomer. Binds 30S ribosomal subunits, but not 50S ribosomal subunits or 70S ribosomes.

It localises to the cytoplasm. In terms of biological role, one of several proteins that assist in the late maturation steps of the functional core of the 30S ribosomal subunit. Associates with free 30S ribosomal subunits (but not with 30S subunits that are part of 70S ribosomes or polysomes). Required for efficient processing of 16S rRNA. May interact with the 5'-terminal helix region of 16S rRNA. The sequence is that of Ribosome-binding factor A from Bordetella parapertussis (strain 12822 / ATCC BAA-587 / NCTC 13253).